Reading from the N-terminus, the 201-residue chain is Recombination protein RecR (201 aa).

Residues 58-73 (CGRCGALTDVDPCGIC) form a C4-type zinc finger. In terms of domain architecture, Toprim spans 81–178 (ETLCLVSEWD…RVTRLAQGIP (98 aa)).

Belongs to the RecR family.

In terms of biological role, may play a role in DNA repair. It seems to be involved in an RecBC-independent recombinational process of DNA repair. It may act with RecF and RecO. This Nitratidesulfovibrio vulgaris (strain DSM 19637 / Miyazaki F) (Desulfovibrio vulgaris) protein is Recombination protein RecR.